Here is a 1146-residue protein sequence, read N- to C-terminus: Elicitor of plant defense protein 1 (1146 aa).

Disordered regions lie at residues 25-75 and 156-226; these read DPLP…RLSN and ARPP…PRQG. The segment covering 164-177 has biased composition (basic and acidic residues); sequence RAERIKAEDSDQSG. The uDENN domain maps to 246–500; the sequence is PLNTDPNMHP…NLCTEAFSPL (255 aa). A cDENN domain is found at 522–656; sequence VNEIPGSRTI…HRRKLHALLQ (135 aa). Positions 658-1016 constitute a dDENN domain; sequence AAPAKLRYGV…ERETKPGTTA (359 aa). Positions 730-806 are disordered; sequence LHSKVDPNKP…RRSSSFGVDK (77 aa). A compositionally biased stretch (basic and acidic residues) spans 732–743; that stretch reads SKVDPNKPDRPG. A compositionally biased stretch (low complexity) spans 744-760; the sequence is TSKSTRTSPPSSVSPVS. Positions 769 to 783 are enriched in polar residues; it reads TPVSRSDSGFALTST. Basic and acidic residues predominate over residues 784–797; it reads LREKRSRNFDEKTR. The segment at 883 to 931 adopts a Phorbol-ester/DAG-type zinc-finger fold; the sequence is GHCFNWEEGALSSSCSVCDDRAEGDGIYKCSGCSAFAHGRCLGCVSLAC. The interval 1121-1146 is disordered; sequence PRPEQRGTRGLVRKQVPSMLGTSPTN.

It belongs to the EPD1 elicitor family. In terms of assembly, interacts with host cotton EIR5A (AC A0A5J5T2N2) and EIR5D (AC A0A5J5NT52) and host N.benthamiana EIR (AC P0DXJ0).

Its subcellular location is the secreted. It localises to the host cell. Its function is as follows. Acts as an elicitor that triggers defense responses in both Nicotiana benthamiana and cotton plants. Triggers the accumulation of reactive oxygen species (ROS) and the activation of cell death in cotton plants. Induces significantly enhanced resistance of Nicotiana benthamiana to both the broad-host-range filamentous pathogen Botrytis cinerea and the semibiotrophic pathogen Phytophthora capsici. Stimulates the expression of EIR5A (AC A0A5J5T2N2) and EIR5D (AC A0A5J5NT52) in cotton plants and recognition of EPD1 potentiates EIRs to enhance cotton PAMP-triggered immunity (PTI). In Verticillium dahliae (strain VdLs.17 / ATCC MYA-4575 / FGSC 10137) (Verticillium wilt), this protein is Elicitor of plant defense protein 1.